We begin with the raw amino-acid sequence, 175 residues long: MEQQRIEVVGKLGSTYGIRGWLRLYSSTEQAESIFDYQPWFLKIKGQWQPIELESWKFHNHELIVKLKGINEREVAQTLANVEIGVNLSVFPLLDEGDFYWHDLIGCQVVNLQGYAMGVVSEMMETGANDVLVVRASTKDAFGKKERLIPFLYEQVVKRVDLSSKTIEVDWDAGF.

Residues 96-175 (EGDFYWHDLI…TIEVDWDAGF (80 aa)) enclose the PRC barrel domain.

Belongs to the RimM family. In terms of assembly, binds ribosomal protein uS19.

The protein resides in the cytoplasm. An accessory protein needed during the final step in the assembly of 30S ribosomal subunit, possibly for assembly of the head region. Essential for efficient processing of 16S rRNA. May be needed both before and after RbfA during the maturation of 16S rRNA. It has affinity for free ribosomal 30S subunits but not for 70S ribosomes. This Histophilus somni (strain 129Pt) (Haemophilus somnus) protein is Ribosome maturation factor RimM.